A 235-amino-acid chain; its full sequence is Protein shisa-5 (235 aa).

The N-terminal stretch at 1-26 is a signal peptide; the sequence is MAAPAPSLWTLLLLLLLLPPPPGAHG. Residues 27–105 lie on the Extracellular side of the membrane; that stretch reads ELCRPFGEDN…SSFDSDPMSG (79 aa). A helical transmembrane segment spans residues 106–126; that stretch reads FGATVAIGVTIFVVFIATIII. Topologically, residues 127-235 are cytoplasmic; it reads CFTCSCCCLY…TYMDSLKTIP (109 aa). Residues 157-235 form a disordered region; sequence APYPQPQPQP…TYMDSLKTIP (79 aa). Composition is skewed to pro residues over residues 159–172 and 181–211; these read YPQPQPQPVAPSYP and PMPPQPGMPAAPYPTQYPPPYLAQPTGPPPY.

It belongs to the shisa family. In terms of assembly, interacts with PDCD6; PDCD6 can stabilize SHISA5. As to expression, spleen and thymus.

It localises to the endoplasmic reticulum membrane. The protein resides in the nucleus membrane. Its function is as follows. Can induce apoptosis in a caspase-dependent manner and plays a role in p53/TP53-dependent apoptosis. This is Protein shisa-5 (Shisa5) from Mus musculus (Mouse).